The following is a 544-amino-acid chain: Prolyl 4-hydroxylase subunit alpha-3 (544 aa).

Residues 1–19 form the signal peptide; the sequence is MGPGARLAALLAVLALGTG. The stretch at 107–131 forms a coiled coil; the sequence is LEASENIRALKDGYEKVEQDLPAFE. Residues 227–260 form a TPR repeat; that stretch reads EDALDHLAFAYFRAGNVSCALSLSREFLLYSPDN. N242 carries an N-linked (GlcNAc...) asparagine glycan. Positions 422 to 529 constitute a Fe2OG dioxygenase domain; that stretch reads YAEYLQVVNY…KWVANKWIHE (108 aa). Fe cation-binding residues include H440 and D442. Residue N482 is glycosylated (N-linked (GlcNAc...) asparagine). Position 510 (H510) interacts with Fe cation. K520 lines the 2-oxoglutarate pocket.

This sequence belongs to the P4HA family. In terms of assembly, heterotetramer of two alpha-3 chains and two beta chains (the beta chain is the multi-functional PDI). Fe(2+) serves as cofactor. It depends on L-ascorbate as a cofactor. Post-translationally, N-glycosylation plays no role in the catalytic activity. Highly expressed in placenta, liver and fetal skin. Weakly expressed in fetal epiphyseal cartilage, fetal liver, fibroblast, lung and skeletal muscle. Expressed also in fibrous cap of carotid atherosclerotic lesions.

The protein resides in the endoplasmic reticulum lumen. It catalyses the reaction L-prolyl-[collagen] + 2-oxoglutarate + O2 = trans-4-hydroxy-L-prolyl-[collagen] + succinate + CO2. Catalyzes the post-translational formation of 4-hydroxyproline in -Xaa-Pro-Gly- sequences in collagens and other proteins. The chain is Prolyl 4-hydroxylase subunit alpha-3 (P4HA3) from Homo sapiens (Human).